Reading from the N-terminus, the 458-residue chain is Retinoic acid receptor RXR-beta (458 aa).

Over residues 1–17 (GEAGRDGMGDTGRDSRS) the composition is skewed to basic and acidic residues. Residues 1 to 105 (GEAGRDGMGD…GGSGPPEDVK (105 aa)) form a disordered region. The tract at residues 1–129 (GEAGRDGMGD…PGGPGAGKRL (129 aa)) is modulating. Low complexity predominate over residues 18 to 31 (PDSSSPNPLSQGIP). Residues 32-56 (PSSPPGPPHTPSAPPPPMPPPPLGS) are compositionally biased toward pro residues. A compositionally biased stretch (low complexity) spans 57–68 (PFPVISSSMGSP). Pro residues predominate over residues 69–78 (GLPPPAPPGF). 2 NR C4-type zinc fingers span residues 130-150 (CAIC…CEGC) and 166-190 (CRDN…YQKC). The segment at residues 130–195 (CAICGDRSSG…RYQKCLATGM (66 aa)) is a DNA-binding region (nuclear receptor). Positions 196 to 220 (KREAVQEERQRGKDKDGDGDGAGGA) are hinge. Residues 201-213 (QEERQRGKDKDGD) show a composition bias toward basic and acidic residues. Disordered stretches follow at residues 201–223 (QEER…APEE) and 238–261 (QKSD…NDPV). The NR LBD domain occupies 221-454 (PEEMPVDRIL…TFLMEMLEAP (234 aa)). A compositionally biased stretch (gly residues) spans 245-255 (EGPGATGGGGS).

The protein belongs to the nuclear hormone receptor family. NR2 subfamily. In terms of assembly, homodimer (in vitro). Heterodimer with other retinoic acid receptor family members. Binds DNA preferentially as a RAR/RXR heterodimer. Interacts with NR1H3. Interacts with AKAP13. In terms of tissue distribution, expressed in the adrenal gland with main expression in the zona fasciculata (at protein level).

Its subcellular location is the nucleus. The protein resides in the cytoplasm. Its function is as follows. Receptor for retinoic acid. Retinoic acid receptors bind as heterodimers to their target response elements in response to their ligands, all-trans or 9-cis retinoic acid, and regulate gene expression in various biological processes. The RAR/RXR heterodimers bind to the retinoic acid response elements (RARE). In Rattus norvegicus (Rat), this protein is Retinoic acid receptor RXR-beta (Rxrb).